The primary structure comprises 269 residues: Hydroxyethylthiazole kinase (269 aa).

M42 is a substrate binding site. The ATP site is built by R118 and S164. Residue G191 participates in substrate binding.

This sequence belongs to the Thz kinase family. It depends on Mg(2+) as a cofactor.

The enzyme catalyses 5-(2-hydroxyethyl)-4-methylthiazole + ATP = 4-methyl-5-(2-phosphooxyethyl)-thiazole + ADP + H(+). It participates in cofactor biosynthesis; thiamine diphosphate biosynthesis; 4-methyl-5-(2-phosphoethyl)-thiazole from 5-(2-hydroxyethyl)-4-methylthiazole: step 1/1. Its function is as follows. Catalyzes the phosphorylation of the hydroxyl group of 4-methyl-5-beta-hydroxyethylthiazole (THZ). The sequence is that of Hydroxyethylthiazole kinase from Listeria monocytogenes serovar 1/2a (strain ATCC BAA-679 / EGD-e).